The chain runs to 762 residues: MTLFFLTCLLAVFPVVSMKSPIFGPPEIDSVEGTSTSIKCYYPPTSVNRHSRKYWCRQGPKGQCITLISSNGYVSKDYEGRANLTNFPESGTFVVNVDHLIQGDSGSYKCGVGINNRGLSFDVRLRVVPGSGVLNGTQVYAEDLGGKVSISCPFTSANLPNVKSVCKQIADKHCVRVIDSAGYKEPSYEGRAKLIIQGTTQTEFFFIIDQLQVEDDGKYVCQAGDDSSGDKSNVDLHVLKPEPELVYADLGSSVRFDCALGPEVVNVAKFLCQKNKEKTCNLVANTLGQRNQTFKGRILSQNNNGVFSVDITNLRKEDAGLYLCGANSDGQPQKSRPIQAWQLFVNEETTFPSRPSVVKGVVGGSVAVLCPYNPKEVNSVKSWCRWEDTQNGGCPLLVQSTGLVKNQYEQYNGRLVLYDEPGNGTYTVILNQLTAQDAGFYWCLTNGDIHWRSTVELKIVEGQPNLKVPKTVNVELGETVQLTCHSPCKFYSYKKFWCKWTDQGCSALPSQDEGSGQAVVNCDQNSQLINLTLKQVTKGDEGWYWCGVKEGLQYKETVAVYVAVKEKGTGSGALSSVRAAPAEDVIETSVRKVDRKVVQDPRLFVDTQAKDPEDAAGGSIASADPGSSAGQGGSSKVVVSTLVPLALVLALGVLVVGVLRARHRKNVDRISIRSYRTDISMSDFENSRDFGANDNMGASPVSQETTLGGKDEFIATTENTVETEEPKKAKRSSKEEADMAYTAFLLQANNMAANIQDGPSKA.

The N-terminal stretch at 1 to 18 (MTLFFLTCLLAVFPVVSM) is a signal peptide. Positions 19 to 120 (KSPIFGPPEI…GVGINNRGLS (102 aa)) constitute an Ig-like V-type 1; required for binding to polymeric IgA and IgM domain. The Extracellular portion of the chain corresponds to 19-636 (KSPIFGPPEI…SSAGQGGSSK (618 aa)). Disulfide bonds link C40–C110 and C56–C64. Residues N83 and N135 are each glycosylated (N-linked (GlcNAc...) asparagine). Ig-like V-type domains follow at residues 145–238 (GGKV…DLHV), 251–351 (GSSV…ETTF), 363–460 (GGSV…LKIV), and 464–563 (PNLK…VYVA). 8 cysteine pairs are disulfide-bonded: C152–C221, C258–C324, C272–C280, C370–C443, C384–C394, C484–C546, C488–C522, and C498–C505. The N-linked (GlcNAc...) asparagine glycan is linked to N291. The N-linked (GlcNAc...) asparagine glycan is linked to N423. N-linked (GlcNAc...) asparagine glycosylation is present at N530. The tract at residues 604–634 (FVDTQAKDPEDAAGGSIASADPGSSAGQGGS) is disordered. A helical transmembrane segment spans residues 637 to 659 (VVVSTLVPLALVLALGVLVVGVL). The Cytoplasmic segment spans residues 660 to 762 (RARHRKNVDR…ANIQDGPSKA (103 aa)).

In terms of assembly, interacts (mainly via CDR1-like domain) with dimeric IgA. Interacts (mainly via CDR2-like domain) with pentameric IgM. As to quaternary structure, either free or part of the secretory IgA (sIgA) complex that consists of two, four or five IgA monomers, and two additional non-Ig polypeptides, namely the JCHAIN and the secretory component (the proteolytic product of PIGR). Free secretory component interacts with bacterial antigens toxA of C.difficile and eae of E.coli. N-glycosylated. Carries predominantly biantennary complex type glycans which are largely non-fucosylated. Sialylation with NeuAc is common, except for Asn-291 which carries exclusively high mannose glycans. N-glycans attached to Asn-83: Gal2GlcNAc2Man3GlcNAc2; Gal2GlcNAc2Man3GlcNAc2(Fuc); Gal1GlcNAc1Man4GlcNAc2(Fuc); Gal1GlcNAc1Man3GlcNAc2; Gal1GlcNAc1Man4GlcNAc2 and NeuAc1Gal2GlcNAc2Man3GlcNAc2. N-glycans attached to Asn-135: Gal2GlcNAc2Man3GlcNAc2; Gal1GlcNAc1Man3GlcNAc2 and NeuAc1Gal2GlcNAc2Man3GlcNAc2. N-glycans attached to Asn-291: Man5-8GlcNAc2. N-glycans attached to Asn-423: NeuAc1Gal2GlcNAc2Man3GlcNAc2. N-glycans attached to Asn-530: Gal2GlcNAc2Man3GlcNAc2; Gal1GlcNAc1Man3GlcNAc2 and NeuAc1Gal2GlcNAc2Man3GlcNAc2. N-glycosylation is required for anchoring IgA molecules to mucus but is not necessary for Ig binding.

Its subcellular location is the cell membrane. The protein localises to the secreted. Mediates selective transcytosis of polymeric IgA and IgM across mucosal epithelial cells. Binds polymeric IgA and IgM at the basolateral surface of epithelial cells. The complex is then transported across the cell to be secreted at the apical surface. During this process, a cleavage occurs that separates the extracellular (known as the secretory component) from the transmembrane segment. Its function is as follows. Through its N-linked glycans ensures anchoring of secretory IgA (sIgA) molecules to mucus lining the epithelial surface to neutralize extracellular pathogens. On its own (free form) may act as a non-specific microbial scavenger to prevent pathogen interaction with epithelial cells. The protein is Polymeric immunoglobulin receptor (PIGR) of Equus asinus (Donkey).